The sequence spans 144 residues: 3-hydroxyacyl-[acyl-carrier-protein] dehydratase FabZ (144 aa).

Residue His51 is part of the active site.

The protein belongs to the thioester dehydratase family. FabZ subfamily.

The protein localises to the cytoplasm. It carries out the reaction a (3R)-hydroxyacyl-[ACP] = a (2E)-enoyl-[ACP] + H2O. Involved in unsaturated fatty acids biosynthesis. Catalyzes the dehydration of short chain beta-hydroxyacyl-ACPs and long chain saturated and unsaturated beta-hydroxyacyl-ACPs. The protein is 3-hydroxyacyl-[acyl-carrier-protein] dehydratase FabZ of Clostridium botulinum (strain 657 / Type Ba4).